We begin with the raw amino-acid sequence, 545 residues long: Chaperonin GroEL 2 (545 aa).

ATP contacts are provided by residues 29–32, 86–90, Gly413, 479–481, and Asp495; these read TLGP, DGTTT, and NAA.

The protein belongs to the chaperonin (HSP60) family. In terms of assembly, forms a cylinder of 14 subunits composed of two heptameric rings stacked back-to-back. Interacts with the co-chaperonin GroES.

It is found in the cytoplasm. It carries out the reaction ATP + H2O + a folded polypeptide = ADP + phosphate + an unfolded polypeptide.. Together with its co-chaperonin GroES, plays an essential role in assisting protein folding. The GroEL-GroES system forms a nano-cage that allows encapsulation of the non-native substrate proteins and provides a physical environment optimized to promote and accelerate protein folding. The polypeptide is Chaperonin GroEL 2 (Prochlorococcus marinus (strain SARG / CCMP1375 / SS120)).